We begin with the raw amino-acid sequence, 122 residues long: Large ribosomal subunit protein uL14 (122 aa).

The protein belongs to the universal ribosomal protein uL14 family. In terms of assembly, part of the 50S ribosomal subunit. Forms a cluster with proteins L3 and L19. In the 70S ribosome, L14 and L19 interact and together make contacts with the 16S rRNA in bridges B5 and B8.

Binds to 23S rRNA. Forms part of two intersubunit bridges in the 70S ribosome. The sequence is that of Large ribosomal subunit protein uL14 from Saccharopolyspora erythraea (strain ATCC 11635 / DSM 40517 / JCM 4748 / NBRC 13426 / NCIMB 8594 / NRRL 2338).